The following is a 92-amino-acid chain: Probable Fe(2+)-trafficking protein (92 aa).

The protein belongs to the Fe(2+)-trafficking protein family.

In terms of biological role, could be a mediator in iron transactions between iron acquisition and iron-requiring processes, such as synthesis and/or repair of Fe-S clusters in biosynthetic enzymes. This Xanthomonas campestris pv. campestris (strain 8004) protein is Probable Fe(2+)-trafficking protein.